The sequence spans 92 residues: Protein RESPONSE TO LOW SULFUR 4 (92 aa).

Positions 8–63 (VMVAASEVEELRQKNGEMEKAVEEMRKEMLQLWRRTQVAEEAEEHLCSQLAELEAE) form a coiled coil.

Its function is as follows. Required for flower development in short-day conditions. The chain is Protein RESPONSE TO LOW SULFUR 4 from Arabidopsis thaliana (Mouse-ear cress).